Reading from the N-terminus, the 443-residue chain is MEEDSLEDSNLPPKVWHSEMTVSVTGEPPSTVEEEGIPKETDIEIIPEIPETLEPLSLPDVLRISAVLEDTTDQLSILNYIMPVQYEGRQSICVKSREMNLEGTNLDKLPMASTITKIPSPLITEEGPNLPEIRHRGRFAVEFNKMQDLVFKKPTRQTIMTTETLKKIQIDRQFFSDVIADTIKELQDSATYNSLLQALSKERENKMHFYDIIAREEKGRKQIISLQKQLINVKKEWQFEVQSQNEYIANLKDQLQEMKAKSNLENRYMKTNTELQIAQTQKKCNRTEELLVEEIEKLRMKTEEEARTHTEIEMFLRKEQQKLEERLEFWMEKYDKDTEMKQNELNALKATKASDLAHLQDLAKMIREYEQVIIEDRIEKERSKKKVKQDLLELKSVIKLQAWWRGTMIRREIGGFKMPKDKVDSKDSKGKGKGKDKRRGKKK.

2 disordered regions span residues 1–34 (MEED…TVEE) and 415–443 (GFKM…GKKK). Residues 393 to 422 (ELKSVIKLQAWWRGTMIRREIGGFKMPKDK) form the IQ domain. Positions 415–430 (GFKMPKDKVDSKDSKG) are enriched in basic and acidic residues. Over residues 431–443 (KGKGKDKRRGKKK) the composition is skewed to basic residues.

Belongs to the DRC9 family. In terms of assembly, component of the nexin-dynein regulatory complex (N-DRC). Interacts (via IQ domain) with CALM when calcium levels are low. Does not interact with CALM in the presence of Ca(2+). Interacts with the HSP70 proteins HSPA1L and HSPA8. May form a complex with CAMK4 and HSP70.

It is found in the cytoplasm. It localises to the cell projection. Its subcellular location is the cilium. The protein localises to the flagellum. The protein resides in the cytoskeleton. It is found in the flagellum axoneme. Component of the nexin-dynein regulatory complex (N-DRC), a key regulator of ciliary/flagellar motility which maintains the alignment and integrity of the distal axoneme and regulates microtubule sliding in motile axonemes. Binds calmodulin when cellular Ca(2+) levels are low and thereby contributes to the regulation of calcium and calmodulin-dependent protein kinase IV (CAMK4) activity; contributes to the regulation of CAMK4 signaling cascades. Required for normal axoneme assembly in sperm flagella, normal sperm tail formation and for male fertility. The protein is Dynein regulatory complex protein 9 (IQCG) of Homo sapiens (Human).